The chain runs to 211 residues: Large ribosomal subunit protein uL4 (211 aa).

Over residues 41-53 the composition is skewed to polar residues; that stretch reads QAHSRQGTASTLT. Positions 41 to 85 are disordered; it reads QAHSRQGTASTLTRAEVRGGGRKPYKQKGTGRARQGSIRTPLRPG. Residues 60–71 are compositionally biased toward basic residues; it reads GGRKPYKQKGTG.

This sequence belongs to the universal ribosomal protein uL4 family. In terms of assembly, part of the 50S ribosomal subunit.

One of the primary rRNA binding proteins, this protein initially binds near the 5'-end of the 23S rRNA. It is important during the early stages of 50S assembly. It makes multiple contacts with different domains of the 23S rRNA in the assembled 50S subunit and ribosome. Its function is as follows. Forms part of the polypeptide exit tunnel. The protein is Large ribosomal subunit protein uL4 of Prochlorococcus marinus (strain SARG / CCMP1375 / SS120).